Reading from the N-terminus, the 257-residue chain is 5'-nucleotidase SurE (257 aa).

A divalent metal cation contacts are provided by aspartate 9, aspartate 10, serine 40, and asparagine 93.

It belongs to the SurE nucleotidase family. Requires a divalent metal cation as cofactor.

The protein localises to the cytoplasm. It catalyses the reaction a ribonucleoside 5'-phosphate + H2O = a ribonucleoside + phosphate. Functionally, nucleotidase that shows phosphatase activity on nucleoside 5'-monophosphates. This Campylobacter hominis (strain ATCC BAA-381 / DSM 21671 / CCUG 45161 / LMG 19568 / NCTC 13146 / CH001A) protein is 5'-nucleotidase SurE.